The primary structure comprises 104 residues: MEFKVGQDVSEIWNIHGSILPEVLMYMFPRSDESYDWEFVNDNGRHIFTAWRKSEPIPTLEEIEKAAIELEEKKNAPKPKTLEERVADLEKQVAYLTSKVEGTN.

It localises to the cytoplasm. The chain is SPbeta prophage-derived stress response protein SCP1 (yorD) from Bacillus subtilis (strain 168).